We begin with the raw amino-acid sequence, 105 residues long: Heme oxygenase (mycobilin-producing) (105 aa).

Residues 3–92 (VVKINAIEVP…VATGASLLEF (90 aa)) form the ABM domain. Heme-binding positions include 22-26 (RFAHR), His75, and 83-86 (VATG).

Belongs to the antibiotic biosynthesis monooxygenase family. Homodimer.

It catalyses the reaction heme b + 3 AH2 + 3 O2 + 2 H(+) = mycobilin a + Fe(2+) + 3 A + 3 H2O. The enzyme catalyses heme b + 3 AH2 + 3 O2 + 2 H(+) = mycobilin b + Fe(2+) + 3 A + 3 H2O. Functionally, catalyzes the oxidative degradation of the heme macrocyclic porphyrin ring in the presence of a suitable electron donor such as ascorbate or NADPH--cytochrome P450 reductase, with subsequent release of free iron. This Mycobacterium tuberculosis (strain CDC 1551 / Oshkosh) protein is Heme oxygenase (mycobilin-producing) (mhuD).